Consider the following 862-residue polypeptide: MNRKYVPQEIEEKWQRYWEEKNTFKVTEDPSKKKYYLLEMFPYPSGKIHIGHVRNYTIGDVVARYKRMEGYNVLHPMGWDSFGMPAENAAIERGIHPSLWTNENITHMRKQLKRMGFSYDWDREVSTCEPVYYRWEQLFFLWMYEKGLAYKKTSSVNWCPRCQTVLANEQVEAGLCWRCGSEVVEKILDQWFFRITAYIDELLAGCDRLTGWPERVLTMQRNWIGKSYGCEVSFPMADGNGDIKVFTTRQDTLFGATFMLIAAEHPLVMELIKGKPVEKDARTFAEEVKKQDKLMRTSDYYEKQGLFLDCYCLNPLTGWEMPIFATNFVLADYGTGCVMAVPTHDQRDFEFAEKFGLRKVVVISPPDKTLDPETMTEAYVEEGILVNSGPFNGMENLKALDAIADHLIALGRGKRTIQYRLRDWGISRQRYWGAPIPMIMCPKCGTVPVPEAELPVVLPRDVDFSGEGGSPLAKHPEFLNTTCPSCGGPAKRESDTMDTFVESSWYFERYCCPHFAEKPGLNRQQVDYWMPVDQYIGGIEHAILHLLYARFYTRMLRDFGLVGVDEPFTNLLTQGMVCKETTRCPDHGYLYPEEVREGRCIHCLAEVIVGKTEKMSKSLKNVVDPDYLVRQYGADTARMFCLFAAPPEKDLEWSDQGVEGSFRFIGRTWRIVVDYLDDLQGIAPFAGDGELEGELKSLRRKTHQTIRKVRDDMGERFHFNTAISAIMELVNTLYGLPRPPREDRTALAVIRETIEAIILLLAPIVPHLTEELWQMLGHQGTCLADTPLPVYDPTVAAEDEMTIVIQVNGKVRSRVIVAADEAEDKIKALAMGDEKVSRFLEGKSVIKQVYVPKKLVNIVVKG.

Residues 42 to 52 carry the 'HIGH' region motif; sequence PYPSGKIHIGH. A 'KMSKS' region motif is present at residues 614–618; the sequence is KMSKS. Lys617 is an ATP binding site.

Belongs to the class-I aminoacyl-tRNA synthetase family.

The protein localises to the cytoplasm. The catalysed reaction is tRNA(Leu) + L-leucine + ATP = L-leucyl-tRNA(Leu) + AMP + diphosphate. The chain is Leucine--tRNA ligase from Syntrophus aciditrophicus (strain SB).